Consider the following 199-residue polypeptide: Probable molybdenum cofactor guanylyltransferase (199 aa).

GTP contacts are provided by residues 6–8 (LAG), Lys-18, Asp-65, and Asp-97. Asp-97 is a binding site for Mg(2+).

The protein belongs to the MobA family. It depends on Mg(2+) as a cofactor.

Its subcellular location is the cytoplasm. It carries out the reaction Mo-molybdopterin + GTP + H(+) = Mo-molybdopterin guanine dinucleotide + diphosphate. Its function is as follows. Transfers a GMP moiety from GTP to Mo-molybdopterin (Mo-MPT) cofactor (Moco or molybdenum cofactor) to form Mo-molybdopterin guanine dinucleotide (Mo-MGD) cofactor. The protein is Probable molybdenum cofactor guanylyltransferase of Staphylococcus aureus (strain COL).